The sequence spans 447 residues: ATP-dependent protease ATPase subunit HslU (447 aa).

Residues isoleucine 18, glycine 60–glutamate 65, aspartate 259, glutamate 325, and arginine 397 contribute to the ATP site.

It belongs to the ClpX chaperone family. HslU subfamily. A double ring-shaped homohexamer of HslV is capped on each side by a ring-shaped HslU homohexamer. The assembly of the HslU/HslV complex is dependent on binding of ATP.

Its subcellular location is the cytoplasm. ATPase subunit of a proteasome-like degradation complex; this subunit has chaperone activity. The binding of ATP and its subsequent hydrolysis by HslU are essential for unfolding of protein substrates subsequently hydrolyzed by HslV. HslU recognizes the N-terminal part of its protein substrates and unfolds these before they are guided to HslV for hydrolysis. The protein is ATP-dependent protease ATPase subunit HslU of Burkholderia cenocepacia (strain HI2424).